The chain runs to 207 residues: Outer-membrane lipoprotein carrier protein (207 aa).

Positions 1-21 are cleaved as a signal peptide; it reads MRLFRVLLLSAVAFALSPAQA.

It belongs to the LolA family. Monomer.

The protein localises to the periplasm. Its function is as follows. Participates in the translocation of lipoproteins from the inner membrane to the outer membrane. Only forms a complex with a lipoprotein if the residue after the N-terminal Cys is not an aspartate (The Asp acts as a targeting signal to indicate that the lipoprotein should stay in the inner membrane). The sequence is that of Outer-membrane lipoprotein carrier protein from Azotobacter vinelandii (strain DJ / ATCC BAA-1303).